The following is a 116-amino-acid chain: Flagellar transcriptional regulator FlhD (116 aa).

The protein belongs to the FlhD family. Homodimer; disulfide-linked. Forms a heterohexamer composed of two FlhC and four FlhD subunits. Each FlhC binds a FlhD dimer, forming a heterotrimer, and a hexamer assembles by dimerization of two heterotrimers.

The protein localises to the cytoplasm. Functionally, functions in complex with FlhC as a master transcriptional regulator that regulates transcription of several flagellar and non-flagellar operons by binding to their promoter region. Activates expression of class 2 flagellar genes, including fliA, which is a flagellum-specific sigma factor that turns on the class 3 genes. Also regulates genes whose products function in a variety of physiological pathways. The chain is Flagellar transcriptional regulator FlhD from Serratia proteamaculans (strain 568).